We begin with the raw amino-acid sequence, 320 residues long: Malate dehydrogenase (320 aa).

Residues 10-15 (GSGMIG) and Asp-34 each bind NAD(+). Residues Arg-83 and Arg-89 each coordinate substrate. NAD(+) is bound by residues Asn-96 and 119-121 (ITN). Substrate contacts are provided by Asn-121 and Arg-152. His-176 functions as the Proton acceptor in the catalytic mechanism.

It belongs to the LDH/MDH superfamily. MDH type 3 family.

It carries out the reaction (S)-malate + NAD(+) = oxaloacetate + NADH + H(+). Catalyzes the reversible oxidation of malate to oxaloacetate. This Brucella melitensis biotype 2 (strain ATCC 23457) protein is Malate dehydrogenase.